The primary structure comprises 87 residues: Large ribosomal subunit protein bL31B (87 aa).

It belongs to the bacterial ribosomal protein bL31 family. Type B subfamily. Part of the 50S ribosomal subunit.

In Corynebacterium kroppenstedtii (strain DSM 44385 / JCM 11950 / CIP 105744 / CCUG 35717), this protein is Large ribosomal subunit protein bL31B.